We begin with the raw amino-acid sequence, 550 residues long: MRRSKTRRIFHVSITLLLVSTIFCQNGTKPHNNSTSDQMSSSWSNRSQTMYSNASSLLSDLLLDYDIRLRPGFGGDALLLTMDIIIASFDSISEVDMDYTLTMYLHQYWTDERLRWSNEIPIDEMTLSGEFSQNIWVPDTFLANDKHSYLHEVTERNKMLRINVDGKVAYGMRLTSTLSCSMNLRNFPLDSQNCTVEIESYGYTTSEVLMKWNYPLAVHGVEQADVPQFTITGFHTEDSIVSTATGSYQRLSLVFQLRRSVGYFIFQTYLPCVLIVMLSWVSFWINHEATSARVALGITTVLTMTTISTGVRQSLPRISYVKSIDIYLVMCFVFVFAALLEYAAVNYSYWGRERGKGGGGNEWPVNGANKEDRESAVNVQKWVPSGLMDGVPQPQDRRVEALEEAMSTSNTAAQNNNFESTSKPKKRSSSPIPPLCRAGNTISEESESPDYPRYSTTSLKGARPHASLNHKTHHLKGRSSARAKRRMTLARMNVSMKQSISGIGRRARKVIPTIRVRDVNLIDKYSRVVFPVCFIVFNLFYWSYYMMVPS.

The N-terminal stretch at M1–C24 is a signal peptide. Residues Q25–F264 are Extracellular-facing. 6 N-linked (GlcNAc...) asparagine glycosylation sites follow: N26, N32, N33, N45, N53, and N193. An intrachain disulfide couples C180 to C194. The next 3 membrane-spanning stretches (helical) occupy residues I265–I285, A292–V311, and I324–A344. Over V345–R527 the chain is Cytoplasmic. The tract at residues A405–H465 is disordered. Over residues M406–T421 the composition is skewed to polar residues. A helical transmembrane segment spans residues V528 to V548.

It belongs to the ligand-gated ion channel (TC 1.A.9) family. Gamma-aminobutyric acid receptor (TC 1.A.9.5) subfamily.

The protein resides in the postsynaptic cell membrane. It localises to the cell membrane. GABA, an inhibitory neurotransmitter, mediates neuronal inhibition by binding to the GABA receptor and opening an integral chloride channel. The protein is Gamma-aminobutyric acid receptor subunit beta (gab-1) of Caenorhabditis elegans.